A 330-amino-acid polypeptide reads, in one-letter code: Aspartate--ammonia ligase (330 aa).

This sequence belongs to the class-II aminoacyl-tRNA synthetase family. AsnA subfamily.

The protein resides in the cytoplasm. The catalysed reaction is L-aspartate + NH4(+) + ATP = L-asparagine + AMP + diphosphate + H(+). Its pathway is amino-acid biosynthesis; L-asparagine biosynthesis; L-asparagine from L-aspartate (ammonia route): step 1/1. The polypeptide is Aspartate--ammonia ligase (Aeromonas salmonicida (strain A449)).